A 130-amino-acid chain; its full sequence is MVRVSVLNDALKSMFNAEKRGKRQVMIRPSSKVVIKFLMVMQKHGYIGEFEYVDDHRSGKIVVELNGRLNKCGVISPRFDVGVKEIEPWTARLLPSRQFGYIVLTTSAGIMDHEEARRKNVGGKVLGFFY.

It belongs to the universal ribosomal protein uS8 family.

Its subcellular location is the cytoplasm. In Daucus carota (Wild carrot), this protein is Small ribosomal subunit protein uS8 (RPS15A).